The primary structure comprises 370 residues: Homospermidine synthase 2 (370 aa).

It belongs to the deoxyhypusine synthase family. Homotetramer. It depends on NAD(+) as a cofactor. The N-terminus is blocked. As to expression, expressed in roots.

The enzyme catalyses putrescine + spermidine = sym-homospermidine + propane-1,3-diamine. Its pathway is alkaloid biosynthesis; pyrrolizidine alkaloid biosynthesis. In terms of biological role, catalyzes the transfer of an aminobutyl unit from spermidine onto putrescine. The resulting polyamine homospermidine is a precursor in the biosynthesis of pyrrolizidine alkaloids. This Senecio vernalis (Spring groundsel) protein is Homospermidine synthase 2.